The sequence spans 366 residues: Sodium-potassium/proton antiporter ChaA (366 aa).

At 1 to 16 (MSNAQEAVKTRHKETS) the chain is on the cytoplasmic side. 2 consecutive transmembrane segments (helical) span residues 17–37 (LIFP…QTLP) and 38–58 (VVIA…FSVV). The Cytoplasmic segment spans residues 59–74 (RHADVLAHRLGEPYGS). A helical transmembrane segment spans residues 75–95 (LILSLSVVILEVSLISALMAT). The Periplasmic segment spans residues 96–106 (GDAAPTLMRDT). The chain crosses the membrane as a helical span at residues 107-127 (LYSIIMIVTGGLVGFSLLLGG). At 128 to 143 (RKFATQYMNLFGIKQY) the chain is on the cytoplasmic side. A helical membrane pass occupies residues 144 to 164 (LIALFPLAIIVLVFPMALPAA). Topologically, residues 165 to 167 (NFS) are periplasmic. Residues 168–188 (TGQALLVALISAAMYGVFLLI) form a helical membrane-spanning segment. The Cytoplasmic segment spans residues 189–216 (QTKTHQSLFVYEHEDDSDDDDPHHGKPS). Residues 217-237 (AHSSLWHAIWLIIHLIAVIAV) traverse the membrane as a helical segment. The Periplasmic segment spans residues 238 to 255 (TKMNASSLETLLDSMNAP). A helical transmembrane segment spans residues 256–276 (VAFTGFLVALLILSPEGLGAL). Residues 277–290 (KAVLNNQVQRAMNL) are Cytoplasmic-facing. Residues 291–311 (FFGSVLATISLTVPVVTLIAF) form a helical membrane-spanning segment. Residues 312–318 (MTGNELQ) are Periplasmic-facing. Residues 319-339 (FALGAPEMVVMVASLVLCHIS) traverse the membrane as a helical segment. Over 340–345 (FSTGRT) the chain is Cytoplasmic. The chain crosses the membrane as a helical span at residues 346-366 (NVLNGAAHLALFAAYLMTIFA).

The protein belongs to the Ca(2+):cation antiporter (CaCA) (TC 2.A.19) family.

The protein localises to the cell inner membrane. It catalyses the reaction Na(+)(in) + H(+)(out) = Na(+)(out) + H(+)(in). The catalysed reaction is K(+)(in) + H(+)(out) = K(+)(out) + H(+)(in). It carries out the reaction Ca(2+)(in) + H(+)(out) = Ca(2+)(out) + H(+)(in). Its activity is regulated as follows. Pronounced pH dependence with sodium as substrate. Ca(2+)/H(+) and Na(+)/H(+) antiporter activities are both inhibited by magnesium. Ca(2+)/H(+) activity is inhibited by the proton ionophore carbonyl cyanide m-chlorophenylhydrazone (CCCP). Functionally, sodium exporter that functions mainly at alkaline pH. Can also function as a potassium/proton and calcium/proton antiporter at alkaline pH. Does not play a major role in calcium export. The K(+)/H(+) antiporter activity may enable E.coli to adapt to K(+) salinity stress and to maintain K(+) homeostasis. The chain is Sodium-potassium/proton antiporter ChaA from Escherichia coli (strain K12).